Here is a 303-residue protein sequence, read N- to C-terminus: Bifunctional protein FolD (303 aa).

NADP(+) is bound by residues 169–171 (GRG), Thr196, and Val237.

Belongs to the tetrahydrofolate dehydrogenase/cyclohydrolase family. In terms of assembly, homodimer.

The enzyme catalyses (6R)-5,10-methylene-5,6,7,8-tetrahydrofolate + NADP(+) = (6R)-5,10-methenyltetrahydrofolate + NADPH. It catalyses the reaction (6R)-5,10-methenyltetrahydrofolate + H2O = (6R)-10-formyltetrahydrofolate + H(+). It functions in the pathway one-carbon metabolism; tetrahydrofolate interconversion. In terms of biological role, catalyzes the oxidation of 5,10-methylenetetrahydrofolate to 5,10-methenyltetrahydrofolate and then the hydrolysis of 5,10-methenyltetrahydrofolate to 10-formyltetrahydrofolate. This chain is Bifunctional protein FolD, found in Micrococcus luteus (strain ATCC 4698 / DSM 20030 / JCM 1464 / CCM 169 / CCUG 5858 / IAM 1056 / NBRC 3333 / NCIMB 9278 / NCTC 2665 / VKM Ac-2230) (Micrococcus lysodeikticus).